The sequence spans 217 residues: Ribosomal large subunit pseudouridine synthase E (217 aa).

The span at 19–28 shows a compositional bias: polar residues; that stretch reads HQVKRFSSQR. The tract at residues 19–38 is disordered; sequence HQVKRFSSQRSTRRKPENQP. Residue Asp-79 is the Nucleophile of the active site.

The protein belongs to the pseudouridine synthase RsuA family.

It carries out the reaction uridine(2457) in 23S rRNA = pseudouridine(2457) in 23S rRNA. Responsible for synthesis of pseudouridine from uracil-2457 in 23S ribosomal RNA. The chain is Ribosomal large subunit pseudouridine synthase E (rluE) from Escherichia coli O157:H7.